We begin with the raw amino-acid sequence, 465 residues long: FeMo cofactor biosynthesis protein FixZ (465 aa).

The tract at residues 1–36 (MSEPEIKVGKTSSALFDRAPMAPSMPGGRASSSHGL) is disordered. Residues 61 to 312 (HHYFARMHXX…MRHCQQCRAD (252 aa)) form the Radical SAM core domain. [4Fe-4S] cluster is bound by residues Cys-75 and Cys-79. S-adenosyl-L-methionine is bound at residue Tyr-81. [4Fe-4S] cluster is bound at residue Cys-82. 3 residues coordinate S-adenosyl-L-methionine: Gly-129, Thr-181, and Ile-233. 2 residues coordinate [4Fe-4S] cluster: Cys-306 and Cys-309.

The protein belongs to the radical SAM superfamily. NifB family. [4Fe-4S] cluster is required as a cofactor.

It participates in cofactor biosynthesis; Fe-Mo cofactor biosynthesis. Its function is as follows. Involved in the biosynthesis of the iron-molybdenum cofactor (FeMo-co or M-cluster) found in the dinitrogenase enzyme of the nitrogenase complex in nitrogen-fixing microorganisms. Catalyzes the crucial step of radical SAM-dependent carbide insertion that occurs concomitant with the insertion of a 9th sulfur and the rearrangement/coupling of two [4Fe-4S] clusters into a [8Fe-9S-C] cluster, the precursor to the M-cluster. The sequence is that of FeMo cofactor biosynthesis protein FixZ (fixZ) from Rhizobium leguminosarum.